Here is a 435-residue protein sequence, read N- to C-terminus: Adenylosuccinate synthetase (435 aa).

GTP-binding positions include 22 to 28 and 50 to 52; these read GDEGKGK and GHT. The active-site Proton acceptor is D23. Mg(2+) contacts are provided by D23 and G50. IMP is bound by residues 23-26, 48-51, T140, R154, Q235, T250, and R314; these read DEGK and NAGH. H51 functions as the Proton donor in the catalytic mechanism. 310-316 lines the substrate pocket; that stretch reads ATTGRKR. GTP contacts are provided by residues R316, 342–344, and 424–426; these read KLD and SVG.

It belongs to the adenylosuccinate synthetase family. In terms of assembly, homodimer. Mg(2+) serves as cofactor.

The protein localises to the cytoplasm. It catalyses the reaction IMP + L-aspartate + GTP = N(6)-(1,2-dicarboxyethyl)-AMP + GDP + phosphate + 2 H(+). The protein operates within purine metabolism; AMP biosynthesis via de novo pathway; AMP from IMP: step 1/2. Plays an important role in the de novo pathway of purine nucleotide biosynthesis. Catalyzes the first committed step in the biosynthesis of AMP from IMP. The protein is Adenylosuccinate synthetase of Chlorobaculum tepidum (strain ATCC 49652 / DSM 12025 / NBRC 103806 / TLS) (Chlorobium tepidum).